The chain runs to 103 residues: Potassium voltage-gated channel subfamily E member 3 (103 aa).

N-linked (GlcNAc...) asparagine glycans are attached at residues asparagine 5, asparagine 22, and asparagine 41. Positions 30–52 (LCRPGPGPGPDNQTEDRRASLPG) are disordered. A helical membrane pass occupies residues 57–77 (SYMYILFVMFLFAVTVGSLIL). The tract at residues 68–79 (FAVTVGSLILGY) is interaction with KCNQ1. Over 78 to 103 (GYTRSRKVDKRSDPYHVYIKNRVSMI) the chain is Cytoplasmic.

This sequence belongs to the potassium channel KCNE family. Interacts with KCNB1. Interacts with KCNC2. Associates with KCNC4/Kv3.4. Interacts with KCNQ1; associates with a KCNQ1:KCNE3 stoichiometry of 4:4; produces a current with nearly instantaneous activation with a linear current-voltage relationship and alters membrane raft localization; affects KCNQ1 structure and gating properties.

The protein localises to the cell membrane. The protein resides in the cytoplasm. It localises to the perikaryon. It is found in the cell projection. Its subcellular location is the dendrite. The protein localises to the membrane raft. Its function is as follows. Ancillary protein that functions as a regulatory subunit of the voltage-gated potassium (Kv) channel complex composed of pore-forming and potassium-conducting alpha subunits and of regulatory beta subunits. KCNE3 beta subunit modulates the gating kinetics and enhances stability of the channel complex. Alters the gating of the delayed rectifier Kv channel containing KCNB1 alpha subunit. Associates with KCNC4/Kv3.4 alpha subunit to form the subthreshold Kv channel in skeletal muscle and to establish the resting membrane potential (RMP) in muscle cells. Association with KCNQ1/KCLQT1 alpha subunit may form the intestinal cAMP-stimulated potassium channel involved in chloride secretion that produces a current with nearly instantaneous activation with a linear current-voltage relationship. This is Potassium voltage-gated channel subfamily E member 3 from Mus musculus (Mouse).